The primary structure comprises 349 residues: MSLIRSQAYTNAGVNINAGNALISNIKSFVSETNIQGVLSDLGGFGGLFKLNLTQVDNPVLVSSTDGVGTKLKFAFDFNKHDTVGIDLVAMCVNDILVQGARPLFFLDYFATSKLDVDKATQVIYGISEGCKQARCALLGGETAELPGMYTEGEYDLAGFCVGIVDQSKIIDGSSIKVGDTIIGLASSGIHSNGYSLVRQIINQCAIEPDNIIPGSRDTFKQVLLKPTFIYSDIICNLIKDISIKGMVHITGGGFYDNIPRVLPQSVVANIQFSSWDIPPIFYWLQEQGSLSWSEMLQVFNCGIGYVLIIPNDSVTRAMNILKSMEVSAWIIGSIEKQNVGDEQVIITY.

The protein belongs to the AIR synthase family.

The protein resides in the cytoplasm. The catalysed reaction is 2-formamido-N(1)-(5-O-phospho-beta-D-ribosyl)acetamidine + ATP = 5-amino-1-(5-phospho-beta-D-ribosyl)imidazole + ADP + phosphate + H(+). It participates in purine metabolism; IMP biosynthesis via de novo pathway; 5-amino-1-(5-phospho-D-ribosyl)imidazole from N(2)-formyl-N(1)-(5-phospho-D-ribosyl)glycinamide: step 2/2. The sequence is that of Phosphoribosylformylglycinamidine cyclo-ligase from Lawsonia intracellularis (strain PHE/MN1-00).